The following is a 313-amino-acid chain: Ribosomal protein L11 methyltransferase (313 aa).

T161, G182, D204, and N247 together coordinate S-adenosyl-L-methionine.

The protein belongs to the methyltransferase superfamily. PrmA family.

The protein resides in the cytoplasm. It carries out the reaction L-lysyl-[protein] + 3 S-adenosyl-L-methionine = N(6),N(6),N(6)-trimethyl-L-lysyl-[protein] + 3 S-adenosyl-L-homocysteine + 3 H(+). Its function is as follows. Methylates ribosomal protein L11. This is Ribosomal protein L11 methyltransferase from Alkaliphilus oremlandii (strain OhILAs) (Clostridium oremlandii (strain OhILAs)).